We begin with the raw amino-acid sequence, 213 residues long: Protein RCR1 (213 aa).

The Lumenal segment spans residues 1–39 (MGLISYENEAINEVKKADNHHVSKFVTSYYGPSSSSWQS). The helical transmembrane segment at 40-62 (GIWILFVLFVAAVILIILFTFVA) threads the bilayer. The Cytoplasmic segment spans residues 63 to 213 (NRRRRRMGRA…PERAKVNARS (151 aa)). A PY motif motif is present at residues 104–107 (VPEY). The tract at residues 190 to 213 (ERLPGGTTTQEINPPERAKVNARS) is disordered. Basic and acidic residues predominate over residues 203-213 (PPERAKVNARS).

Interacts with PMT4 and WW domain of RSP5.

It localises to the endoplasmic reticulum membrane. Regulates chitin deposition in the cell wall. This Saccharomyces cerevisiae (strain ATCC 204508 / S288c) (Baker's yeast) protein is Protein RCR1 (RCR1).